We begin with the raw amino-acid sequence, 452 residues long: MASPVQALLLDMDGVMAEVSQSYRQAIIDTARHFGVSVTHEDIDHTKLAGNANNDWQLTHRLVVDGLNGASSAPTLEAVTAQFEALYQGVGNTLGLCELETLLTPKGLLRELHRRQPKGMAVVTGRPRKDCAKFLTTHGIEDLFPVQIWLEDCPPKPSPEPILLALKALGVEACHAAMVGDTVDDIIAGRKAGAVAYGVLTPQTYAKSILEQTPAAIGKVLEQVGASVVLTPGLGELLDLVPAVPTASKAPTVNGKSGVREANISRVTKETSISVKLSLDGTGKSKVSSGIGFLDHMLTALAKHSRFDLELDCKGDTWIDDHHTTEDCALTLGEAFDVALGDRAGIARFGSACVPLDEALSRAIVDISSRAHSEINLQLVRPSVGELSSEMITHFFESFASAALXTLHVDVLRGRNDHHRAEASFKALAVALRTAVKHDATAGVPSTKGVLA.

The tract at residues 1–233 (MASPVQALLL…VGASVVLTPG (233 aa)) is unknown activity. Positions 234–452 (LGELLDLVPA…GVPSTKGVLA (219 aa)) are imidazoleglycerol-phosphate dehydratase.

It belongs to the imidazoleglycerol-phosphate dehydratase family.

The catalysed reaction is D-erythro-1-(imidazol-4-yl)glycerol 3-phosphate = 3-(imidazol-4-yl)-2-oxopropyl phosphate + H2O. Its pathway is amino-acid biosynthesis; L-histidine biosynthesis; L-histidine from 5-phospho-alpha-D-ribose 1-diphosphate: step 6/9. This is Imidazoleglycerol-phosphate dehydratase (HIS3) from Phytophthora nicotianae (Potato buckeye rot agent).